A 782-amino-acid polypeptide reads, in one-letter code: Protein VAC14 homolog (782 aa).

Met1 bears the N-acetylmethionine mark. 4 HEAT repeats span residues 5 to 42 (KDFA…EFVA), 89 to 126 (LYLK…VARG), 171 to 208 (FDLV…VPDI), and 212 to 249 (DYLP…EIKK). The residue at position 11 (Thr11) is a Phosphothreonine. Disordered regions lie at residues 335 to 372 (EDDE…DGSC) and 471 to 517 (SSPA…LECS). Residues 438-475 (RHTDSLFPILLQTLSDESDEVILKDLEVLAEIASSPAG) form an HEAT 5 repeat. A compositionally biased stretch (low complexity) spans 478 to 488 (DDPGPLDGPDL). Thr499 carries the post-translational modification Phosphothreonine. The segment covering 506-517 (LNTSGTKGLECS) has biased composition (polar residues). Position 517 is a phosphoserine (Ser517). The stretch at 560-598 (LNAENIFHSMADILLREEDLKFASTMVHALNTILLTSTE) is one HEAT 6 repeat. The residue at position 743 (Ser743) is a Phosphoserine. Residues 773-777 (GDHLD) are mediates interaction with the PDZ domain of NOS1.

It belongs to the VAC14 family. As to quaternary structure, forms pentamers. Component of the PI(3,5)P2 regulatory complex/PAS complex, at least composed of PIKFYVE, FIG4 and VAC14. VAC14 nucleates the assembly of the complex and serves as a scaffold by pentamerizing into a star-shaped structure, which can bind a single copy each of PIKFYVE and FIG4 and coordinates their activities. Interacts with NOS1. In terms of assembly, (Microbial infection) Interacts with HTLV-1 Tax. Ubiquitously expressed.

Its subcellular location is the endosome membrane. It localises to the microsome membrane. In terms of biological role, scaffold protein component of the PI(3,5)P2 regulatory complex which regulates both the synthesis and turnover of phosphatidylinositol 3,5-bisphosphate (PtdIns(3,5)P2). Pentamerizes into a star-shaped structure and nucleates the assembly of the complex. The pentamer binds a single copy each of PIKFYVE and FIG4 and coordinates both PIKfyve kinase activity and FIG4 phosphatase activity, being required to maintain normal levels of phosphatidylinositol 3-phosphate (PtdIns(3)P) and phosphatidylinositol 5-phosphate (PtdIns(5)P). Plays a role in the biogenesis of endosome carrier vesicles (ECV) / multivesicular bodies (MVB) transport intermediates from early endosomes. This Homo sapiens (Human) protein is Protein VAC14 homolog (VAC14).